The following is a 110-amino-acid chain: Large ribosomal subunit protein uL22 (110 aa).

The protein belongs to the universal ribosomal protein uL22 family. As to quaternary structure, part of the 50S ribosomal subunit.

Functionally, this protein binds specifically to 23S rRNA; its binding is stimulated by other ribosomal proteins, e.g. L4, L17, and L20. It is important during the early stages of 50S assembly. It makes multiple contacts with different domains of the 23S rRNA in the assembled 50S subunit and ribosome. In terms of biological role, the globular domain of the protein is located near the polypeptide exit tunnel on the outside of the subunit, while an extended beta-hairpin is found that lines the wall of the exit tunnel in the center of the 70S ribosome. This Shewanella frigidimarina (strain NCIMB 400) protein is Large ribosomal subunit protein uL22.